Consider the following 809-residue polypeptide: Phenylalanine--tRNA ligase beta subunit (809 aa).

The tRNA-binding domain occupies 39-152; it reads KDKWPNVYVG…ADALVGMLAS (114 aa). The B5 domain occupies 404-492; the sequence is KERNGIVLSL…RIAGYHTIPC (89 aa). 4 residues coordinate Mg(2+): D470, D476, E479, and E480. One can recognise an FDX-ACB domain in the interval 717–808; it reads NRFPAVERDL…LNTETGAVLR (92 aa).

This sequence belongs to the phenylalanyl-tRNA synthetase beta subunit family. Type 1 subfamily. As to quaternary structure, tetramer of two alpha and two beta subunits. Mg(2+) serves as cofactor.

It localises to the cytoplasm. It catalyses the reaction tRNA(Phe) + L-phenylalanine + ATP = L-phenylalanyl-tRNA(Phe) + AMP + diphosphate + H(+). This is Phenylalanine--tRNA ligase beta subunit from Dehalococcoides mccartyi (strain CBDB1).